The following is a 359-amino-acid chain: N-acetyl-gamma-glutamyl-phosphate reductase (359 aa).

Residue Cys-162 is part of the active site.

The protein belongs to the NAGSA dehydrogenase family. Type 1 subfamily.

Its subcellular location is the cytoplasm. It carries out the reaction N-acetyl-L-glutamate 5-semialdehyde + phosphate + NADP(+) = N-acetyl-L-glutamyl 5-phosphate + NADPH + H(+). It functions in the pathway amino-acid biosynthesis; L-arginine biosynthesis; N(2)-acetyl-L-ornithine from L-glutamate: step 3/4. In terms of biological role, catalyzes the NADPH-dependent reduction of N-acetyl-5-glutamyl phosphate to yield N-acetyl-L-glutamate 5-semialdehyde. The protein is N-acetyl-gamma-glutamyl-phosphate reductase of Prochlorococcus marinus (strain SARG / CCMP1375 / SS120).